The sequence spans 170 residues: N-glycosidase R617 (170 aa).

It belongs to the YbiA family.

The enzyme catalyses 2,5-diamino-6-hydroxy-4-(5-phosphoribosylamino)-pyrimidine + H2O = 2,5,6-triamino-4-hydroxypyrimidine + D-ribose 5-phosphate. The catalysed reaction is 5-amino-6-(5-phospho-D-ribosylamino)uracil + H2O = 5,6-diaminouracil + D-ribose 5-phosphate. Functionally, catalyzes the hydrolysis of the N-glycosidic bond in the first two intermediates of riboflavin biosynthesis, which are highly reactive metabolites, yielding relatively innocuous products. Thus, can divert a surplus of harmful intermediates into relatively harmless products and pre-empt the damage these intermediates would otherwise do. May act on other substrates in vivo. The sequence is that of N-glycosidase R617 from Acanthamoeba polyphaga mimivirus (APMV).